A 311-amino-acid chain; its full sequence is Urease accessory protein UreD 2 (311 aa).

The protein belongs to the UreD family. In terms of assembly, ureD, UreF and UreG form a complex that acts as a GTP-hydrolysis-dependent molecular chaperone, activating the urease apoprotein by helping to assemble the nickel containing metallocenter of UreC. The UreE protein probably delivers the nickel.

The protein localises to the cytoplasm. In terms of biological role, required for maturation of urease via the functional incorporation of the urease nickel metallocenter. This is Urease accessory protein UreD 2 from Methylorubrum extorquens (strain PA1) (Methylobacterium extorquens).